A 211-amino-acid polypeptide reads, in one-letter code: Small ribosomal subunit protein bS6c alpha (211 aa).

Over residues 1–19 the composition is skewed to low complexity; it reads MATFSLTSTLPSSSPTTSL. Disordered regions lie at residues 1–25 and 80–100; these read MATF…IPKP and DEDP…PEPQ. The N-terminal 65 residues, 1–65, are a transit peptide targeting the chloroplast; the sequence is MATFSLTSTL…YGPYVKAIAL (65 aa).

Belongs to the bacterial ribosomal protein bS6 family. In terms of assembly, component of the chloroplast small ribosomal subunit (SSU). Mature 70S chloroplast ribosomes of higher plants consist of a small (30S) and a large (50S) subunit. The 30S small subunit contains 1 molecule of ribosomal RNA (16S rRNA) and 24 different proteins. The 50S large subunit contains 3 rRNA molecules (23S, 5S and 4.5S rRNA) and 33 different proteins.

Its subcellular location is the plastid. The protein resides in the chloroplast. Component of the chloroplast ribosome (chloro-ribosome), a dedicated translation machinery responsible for the synthesis of chloroplast genome-encoded proteins, including proteins of the transcription and translation machinery and components of the photosynthetic apparatus. The chain is Small ribosomal subunit protein bS6c alpha (RPS6) from Spinacia oleracea (Spinach).